Here is a 271-residue protein sequence, read N- to C-terminus: Putative phosphoenolpyruvate synthase regulatory protein (271 aa).

Glycine 151–threonine 158 contacts ADP.

It belongs to the pyruvate, phosphate/water dikinase regulatory protein family. PSRP subfamily.

It carries out the reaction [pyruvate, water dikinase] + ADP = [pyruvate, water dikinase]-phosphate + AMP + H(+). The catalysed reaction is [pyruvate, water dikinase]-phosphate + phosphate + H(+) = [pyruvate, water dikinase] + diphosphate. Bifunctional serine/threonine kinase and phosphorylase involved in the regulation of the phosphoenolpyruvate synthase (PEPS) by catalyzing its phosphorylation/dephosphorylation. This is Putative phosphoenolpyruvate synthase regulatory protein from Burkholderia vietnamiensis (strain G4 / LMG 22486) (Burkholderia cepacia (strain R1808)).